A 124-amino-acid polypeptide reads, in one-letter code: Small ribosomal subunit protein bS6 (124 aa).

The segment at 98–124 is disordered; sequence EASPMLKAREERPRREDVREEAEEAAE. Over residues 104–115 the composition is skewed to basic and acidic residues; it reads KAREERPRREDV.

Belongs to the bacterial ribosomal protein bS6 family.

Its function is as follows. Binds together with bS18 to 16S ribosomal RNA. The polypeptide is Small ribosomal subunit protein bS6 (Tolumonas auensis (strain DSM 9187 / NBRC 110442 / TA 4)).